A 63-amino-acid polypeptide reads, in one-letter code: Large ribosomal subunit protein eL29 (63 aa).

Basic residues predominate over residues 1–26; the sequence is MAKSKNHTAHNQTRKAHRNGIKKPKT. Residues 1 to 35 form a disordered region; it reads MAKSKNHTAHNQTRKAHRNGIKKPKTYKYPSLKGV.

Belongs to the eukaryotic ribosomal protein eL29 family. Component of the large ribosomal subunit. Mature ribosomes consist of a small (40S) and a large (60S) subunit. The 40S subunit contains about 32 different proteins and 1 molecule of RNA (18S). The 60S subunit contains 45 different proteins and 3 molecules of RNA (25S, 5.8S and 5S).

Its subcellular location is the cytoplasm. Its function is as follows. Component of the ribosome, a large ribonucleoprotein complex responsible for the synthesis of proteins in the cell. The small ribosomal subunit (SSU) binds messenger RNAs (mRNAs) and translates the encoded message by selecting cognate aminoacyl-transfer RNA (tRNA) molecules. The large subunit (LSU) contains the ribosomal catalytic site termed the peptidyl transferase center (PTC), which catalyzes the formation of peptide bonds, thereby polymerizing the amino acids delivered by tRNAs into a polypeptide chain. The nascent polypeptides leave the ribosome through a tunnel in the LSU and interact with protein factors that function in enzymatic processing, targeting, and the membrane insertion of nascent chains at the exit of the ribosomal tunnel. This Candida albicans (strain SC5314 / ATCC MYA-2876) (Yeast) protein is Large ribosomal subunit protein eL29.